Here is a 397-residue protein sequence, read N- to C-terminus: Keratinocyte differentiation factor 1 (397 aa).

The span at Met1–Leu16 shows a compositional bias: pro residues. Disordered regions lie at residues Met1–Pro67, Glu130–Ser158, and Leu192–Glu214. Residues Arg44–Pro55 are compositionally biased toward basic and acidic residues. Residues Ser201–Arg211 show a composition bias toward polar residues. Ser218 is modified (phosphoserine). Disordered stretches follow at residues Ile304–Gly339 and Ala361–Leu392. The span at Ala321–Pro330 shows a compositional bias: low complexity. The segment covering Ser375 to Ser388 has biased composition (polar residues).

The protein resides in the cytoplasm. It is found in the cell junction. In terms of biological role, plays a role in the regulation of the epidermis formation during early development. Required both as an inhibitor of basal cell proliferation and a promoter of differentiation of basal progenitor cell progeny. This Mus musculus (Mouse) protein is Keratinocyte differentiation factor 1 (Kdf1).